The sequence spans 339 residues: Phosphoribosylformylglycinamidine cyclo-ligase (339 aa).

This sequence belongs to the AIR synthase family.

The protein localises to the cytoplasm. The enzyme catalyses 2-formamido-N(1)-(5-O-phospho-beta-D-ribosyl)acetamidine + ATP = 5-amino-1-(5-phospho-beta-D-ribosyl)imidazole + ADP + phosphate + H(+). The protein operates within purine metabolism; IMP biosynthesis via de novo pathway; 5-amino-1-(5-phospho-D-ribosyl)imidazole from N(2)-formyl-N(1)-(5-phospho-D-ribosyl)glycinamide: step 2/2. This chain is Phosphoribosylformylglycinamidine cyclo-ligase, found in Oceanobacillus iheyensis (strain DSM 14371 / CIP 107618 / JCM 11309 / KCTC 3954 / HTE831).